The primary structure comprises 329 residues: Cuticle collagen 6 (329 aa).

5 triple-helical region regions span residues glycine 142–aspartate 171, glycine 189–proline 212, glycine 216–leucine 248, glycine 253–serine 279, and glycine 282–cysteine 320. The disordered stretch occupies residues proline 146 to tyrosine 329. Over residues aspartate 156–glutamate 173 the composition is skewed to basic and acidic residues. Over residues proline 187–proline 199 the composition is skewed to low complexity. A compositionally biased stretch (pro residues) spans lysine 200–proline 212. A compositionally biased stretch (pro residues) spans valine 251 to asparagine 272. A compositionally biased stretch (low complexity) spans proline 273–glycine 282. A compositionally biased stretch (pro residues) spans cysteine 320–tyrosine 329.

This sequence belongs to the cuticular collagen family. In terms of assembly, collagen polypeptide chains are complexed within the cuticle by disulfide bonds and other types of covalent cross-links.

In terms of biological role, nematode cuticles are composed largely of collagen-like proteins. The cuticle functions both as an exoskeleton and as a barrier to protect the worm from its environment. This Caenorhabditis elegans protein is Cuticle collagen 6.